We begin with the raw amino-acid sequence, 274 residues long: NADPH-dependent 7-cyano-7-deazaguanine reductase (274 aa).

Substrate is bound at residue 80–82 (VES). 82–83 (SK) contacts NADPH. The Thioimide intermediate role is filled by Cys-181. Asp-188 (proton donor) is an active-site residue. 220 to 221 (HE) serves as a coordination point for substrate. NADPH is bound at residue 249-250 (RG).

The protein belongs to the GTP cyclohydrolase I family. QueF type 2 subfamily. In terms of assembly, homodimer.

The protein resides in the cytoplasm. It carries out the reaction 7-aminomethyl-7-carbaguanine + 2 NADP(+) = 7-cyano-7-deazaguanine + 2 NADPH + 3 H(+). Its pathway is tRNA modification; tRNA-queuosine biosynthesis. Functionally, catalyzes the NADPH-dependent reduction of 7-cyano-7-deazaguanine (preQ0) to 7-aminomethyl-7-deazaguanine (preQ1). This chain is NADPH-dependent 7-cyano-7-deazaguanine reductase, found in Paraburkholderia xenovorans (strain LB400).